We begin with the raw amino-acid sequence, 202 residues long: MLKLTPRQAEILAFIKRCLEDNGFPPTRAEIAQELGFKSPNAAEEHLKALARKGAIEMTPGASRGIRIPGLEAKAEEAGLPIIGRVAAGAPILAEQHIEQSCNINPAFFHPQADYLLRVHGMSMKDVGIFDGDLLAVHTCREARNGQIVVARIGDEVTVKRFKREGSKVWLLAENPEFAPIEVDLKEQELVIEGLSVGVIRR.

Residues 28 to 48 (RAEIAQELGFKSPNAAEEHLK) constitute a DNA-binding region (H-T-H motif). Residues serine 123 and lysine 160 each act as for autocatalytic cleavage activity in the active site.

It belongs to the peptidase S24 family. As to quaternary structure, homodimer.

It catalyses the reaction Hydrolysis of Ala-|-Gly bond in repressor LexA.. Represses a number of genes involved in the response to DNA damage (SOS response), including recA and lexA. In the presence of single-stranded DNA, RecA interacts with LexA causing an autocatalytic cleavage which disrupts the DNA-binding part of LexA, leading to derepression of the SOS regulon and eventually DNA repair. The chain is LexA repressor from Pseudomonas putida (Arthrobacter siderocapsulatus).